The primary structure comprises 160 residues: MNFRVGQGYDVHKLVDGRKLILGGVEIPHPTGLLGHSDADALLHAITDALLGAVALGDIGRHFPDTDPRYKGADSRVLLRAAVALLAERGWRPVNVDATLIAQQPKLAPHAVAMVANVAADLGISPDCVNIKGKTNERLGYLGREEAIEAQAVALVERVG.

Positions 10 and 12 each coordinate a divalent metal cation. 4-CDP-2-C-methyl-D-erythritol 2-phosphate contacts are provided by residues 10–12 and 36–37; these read DVH and HS. His44 is an a divalent metal cation binding site. Residues 58–60, 63–67, and Arg144 each bind 4-CDP-2-C-methyl-D-erythritol 2-phosphate; these read DIG and FPDTD.

It belongs to the IspF family. As to quaternary structure, homotrimer. Requires a divalent metal cation as cofactor.

The catalysed reaction is 4-CDP-2-C-methyl-D-erythritol 2-phosphate = 2-C-methyl-D-erythritol 2,4-cyclic diphosphate + CMP. It functions in the pathway isoprenoid biosynthesis; isopentenyl diphosphate biosynthesis via DXP pathway; isopentenyl diphosphate from 1-deoxy-D-xylulose 5-phosphate: step 4/6. Functionally, involved in the biosynthesis of isopentenyl diphosphate (IPP) and dimethylallyl diphosphate (DMAPP), two major building blocks of isoprenoid compounds. Catalyzes the conversion of 4-diphosphocytidyl-2-C-methyl-D-erythritol 2-phosphate (CDP-ME2P) to 2-C-methyl-D-erythritol 2,4-cyclodiphosphate (ME-CPP) with a corresponding release of cytidine 5-monophosphate (CMP). The protein is 2-C-methyl-D-erythritol 2,4-cyclodiphosphate synthase of Dechloromonas aromatica (strain RCB).